A 368-amino-acid polypeptide reads, in one-letter code: DNA replication and repair protein RecF (368 aa).

Residue 30 to 37 participates in ATP binding; the sequence is GRNGSGKT.

Belongs to the RecF family.

It is found in the cytoplasm. The RecF protein is involved in DNA metabolism; it is required for DNA replication and normal SOS inducibility. RecF binds preferentially to single-stranded, linear DNA. It also seems to bind ATP. This Chlorobaculum parvum (strain DSM 263 / NCIMB 8327) (Chlorobium vibrioforme subsp. thiosulfatophilum) protein is DNA replication and repair protein RecF.